Here is a 300-residue protein sequence, read N- to C-terminus: UDP-N-acetylenolpyruvoylglucosamine reductase (300 aa).

One can recognise an FAD-binding PCMH-type domain in the interval 30–194; the sequence is KVGGAADFFV…VGATFRLDPA (165 aa). Arg-174 is a catalytic residue. Ser-223 acts as the Proton donor in catalysis. The active site involves Glu-293.

It belongs to the MurB family. Requires FAD as cofactor.

It localises to the cytoplasm. It carries out the reaction UDP-N-acetyl-alpha-D-muramate + NADP(+) = UDP-N-acetyl-3-O-(1-carboxyvinyl)-alpha-D-glucosamine + NADPH + H(+). It participates in cell wall biogenesis; peptidoglycan biosynthesis. Its function is as follows. Cell wall formation. The polypeptide is UDP-N-acetylenolpyruvoylglucosamine reductase (Geobacter metallireducens (strain ATCC 53774 / DSM 7210 / GS-15)).